We begin with the raw amino-acid sequence, 687 residues long: Adhesion G-protein coupled receptor G1 (687 aa).

The signal sequence occupies residues 1-25 (MAVQVLRQMVYFLLSLFSLVQGAHS). Residue 26 to 33 (GSPREDFR) coordinates heparin. Residues 26–402 (GSPREDFRFC…TEVEATHKHY (377 aa)) lie on the Extracellular side of the membrane. 2 disulfides stabilise this stretch: C35-C91 and C121-C177. N39, N148, and N171 each carry an N-linked (GlcNAc...) asparagine glycan. 190-200 (LQHPQKAAKRP) serves as a coordination point for heparin. In terms of domain architecture, GAIN-B spans 224–395 (DTLSFEEDRV…AVLMVSSTEV (172 aa)). N234, N303, N324, and N341 each carry an N-linked (GlcNAc...) asparagine glycan. 2 cysteine pairs are disulfide-bonded: C346/C377 and C366/C379. A GPS region spans residues 346-395 (CVFWVEDPASSSTGSWSSAGCETVSRDTQTSCLCNHLTYFAVLMVSSTEV). Residues 384–397 (YFAVLMVSSTEVEA) are stachel. Residues 403–423 (LTLLSYVGCVISALACVFTIA) traverse the membrane as a helical segment. The Cytoplasmic segment spans residues 424–442 (AYLCSRRKSRDYTIKVHMN). A helical membrane pass occupies residues 443–463 (LLSAVFLLDVSFLLSEPVALT). Residues 464–471 (GSEAACRT) are Extracellular-facing. A helical membrane pass occupies residues 472–492 (SAMFLHFSLLACLSWMGLEGY). Topologically, residues 493 to 512 (NLYRLVVEVFGTYVPGYLLK) are cytoplasmic. Residues 513–533 (LSIVGWGFPVFLVTLVALVDV) form a helical membrane-spanning segment. Over 534-570 (NNYGPIILAVRRTPERVTYPSMCWIRDSLVSYVTNLG) the chain is Extracellular. The chain crosses the membrane as a helical span at residues 571–591 (LFSLVFLFNLAMLATMVVQIL). The Cytoplasmic segment spans residues 592-603 (RLRPHSQNWPHV). Residues 604-624 (LTLLGLSLVLGLPWALVFFSF) traverse the membrane as a helical segment. At 625-630 (ASGTFQ) the chain is on the extracellular side. The chain crosses the membrane as a helical span at residues 631–651 (LVILYLFSIITSFQGFLIFLW). Residues 652 to 687 (YWSMRFQAQGGPSPLKNNSDSAKLPISSGSTSSSRI) lie on the Cytoplasmic side of the membrane. Residues 664–687 (SPLKNNSDSAKLPISSGSTSSSRI) are disordered. A compositionally biased stretch (low complexity) spans 678–687 (SSGSTSSSRI).

This sequence belongs to the G-protein coupled receptor 2 family. LN-TM7 subfamily. As to quaternary structure, heterodimer of 2 chains generated by proteolytic processing; the large extracellular N-terminal fragment (ADGRG1 NT) and the membrane-bound C-terminal fragment (ADGRG1-CT) predominantly remain associated and non-covalently linked. ADGRG1 NT self-associates in a trans-trans manner; the homophilic interaction enhances receptor signaling. Interacts with TGM2. Interacts with heparin; leading to the reduction of ADGRG1 shedding. Interacts with COL3A1. Part of a GPCR-tetraspanin complex at least consisting of ADGRG1, CD81, eventually CD9, and GNA11 in which CD81 is enhancing the association of ADGRG1 with GNA11. Autoproteolytically cleaved into 2 fragments; the large extracellular N-terminal fragment and the membroune-bound C-terminal fragment predominantly remain associated and non-covalently linked. Post-translationally, N-glycosylated. The secreted ADGRG1 N-terminal fragment is heavily glycosylated. In terms of processing, ubiquitinated. Undergoes polyubiquitination upon activation. As to expression, expressed in neural progenitor cells in fetal forbrain. Expressed in migrating neurons. Expressed in radial glial endfeet (at protein level). Expressed in peritubular myoid cells, Sertoli cells, and germ cells of the testis.

The protein resides in the cell membrane. It localises to the secreted. Its subcellular location is the membrane raft. Forms a heterodimer of 2 chains generated by proteolytic processing that remain associated through non-covalent interactions mediated by the GAIN-B domain. In the inactivated receptor, the Stachel sequence (also named stalk) is embedded in the GAIN-B domain, where it adopts a beta-strand conformation. On activation, the Stachel moves into the 7 transmembrane region and adopts a twisted hook-shaped configuration that forms contacts within the receptor, leading to coupling of a G-alpha protein, which activates signaling. The cleaved GAIN-B and N-terminal domains can then dissociate from the rest of the receptor. Activated by the small-molecule agonist, 3-alpha-acetoxydihydrodeoxygedunin (3-alpha-DOG). Adhesion G-protein coupled receptor (aGPCR) for steroid hormone 17alpha-hydroxypregnenolone (17-OH), which is involved in cell adhesion and cell-cell interactions. Ligand binding causes a conformation change that triggers signaling via guanine nucleotide-binding proteins (G proteins) and modulates the activity of downstream effectors, such as RhoA pathway. ADGRG1 is coupled to G(12) and/or G(13) G proteins (GNA12 and GNA13, respectively) and mediates the activation Rho small GTPases. Acts as a potent suppressor of ferroptosis: binding to 17-OH-binding initiates signaling that down-regulates CD36 and alleviates ferroptosis-induced liver injury. Ligand-binding also induces cell adhesion activity via association with proteins such as collagen III/COL3A1 and TGM2. Mediates cell matrix adhesion in developing neurons and hematopoietic stem cells. Involved in cortical development, specifically in maintenance of the pial basement membrane integrity and in cortical lamination: association with COL3A1 in the developing brain inhibits neuronal migration via activation of the RhoA pathway. Together with TGM2, acts as a regulator of myelination and myelin repair in oligodendrocyte precursor cells. Acts as a hemostatic sensor of shear force: G protein-coupled receptor signaling is activated in response to shear force in platelets, promoting G(13) G protein signaling, and platelet shape change and aggregation in a COL3A1-dependent manner. Acts as an inhibitor of VEGFA production thereby inhibiting angiogenesis through a signaling pathway mediated by PRKCA. Plays a role in the maintenance of hematopoietic stem cells in bone marrow niche. Plays an essential role in testis development. In terms of biological role, adhesion G-protein coupled receptor (aGPCR) for phosphatidylserine, which is involved in microglia-mediated synapse pruning during development. Required to maintain appropriate synaptic numbers in several brain regions in a time- and circuit-dependent fashion: phosphatidylserine-binding acts as a 'eat-me' signal for apoptotic cells, leading to microglial engulfment of phosphatidylserine-positive synapses. This chain is Adhesion G-protein coupled receptor G1, found in Mus musculus (Mouse).